We begin with the raw amino-acid sequence, 103 residues long: Large ribosomal subunit protein bL21 (103 aa).

The protein belongs to the bacterial ribosomal protein bL21 family. Part of the 50S ribosomal subunit. Contacts protein L20.

This protein binds to 23S rRNA in the presence of protein L20. This is Large ribosomal subunit protein bL21 from Methylococcus capsulatus (strain ATCC 33009 / NCIMB 11132 / Bath).